Reading from the N-terminus, the 336-residue chain is 4-hydroxy-2-oxovalerate aldolase (336 aa).

Residues Pro-4–Met-254 enclose the Pyruvate carboxyltransferase domain. Residue Arg-12 to Asp-13 coordinates substrate. Asp-13 is a binding site for Mn(2+). The Proton acceptor role is filled by His-16. Ser-166 and His-193 together coordinate substrate. Residues His-193 and His-195 each coordinate Mn(2+). A substrate-binding site is contributed by Tyr-284.

Belongs to the 4-hydroxy-2-oxovalerate aldolase family.

The enzyme catalyses (S)-4-hydroxy-2-oxopentanoate = acetaldehyde + pyruvate. This chain is 4-hydroxy-2-oxovalerate aldolase, found in Roseiflexus castenholzii (strain DSM 13941 / HLO8).